The following is a 415-amino-acid chain: Gamma-glutamyl phosphate reductase (415 aa).

It belongs to the gamma-glutamyl phosphate reductase family.

It is found in the cytoplasm. The catalysed reaction is L-glutamate 5-semialdehyde + phosphate + NADP(+) = L-glutamyl 5-phosphate + NADPH + H(+). It participates in amino-acid biosynthesis; L-proline biosynthesis; L-glutamate 5-semialdehyde from L-glutamate: step 2/2. In terms of biological role, catalyzes the NADPH-dependent reduction of L-glutamate 5-phosphate into L-glutamate 5-semialdehyde and phosphate. The product spontaneously undergoes cyclization to form 1-pyrroline-5-carboxylate. This Thermotoga maritima (strain ATCC 43589 / DSM 3109 / JCM 10099 / NBRC 100826 / MSB8) protein is Gamma-glutamyl phosphate reductase.